Reading from the N-terminus, the 769-residue chain is Bifunctional glycosyltransferase pgtA (769 aa).

The segment at 25–210 (YQGINNLIIS…SVIFKRSIFT (186 aa)) is N-acetylgalactosamine 3-beta-galactosyltransferase. Residues 410–441 (NNINNNNNNNNNNNNNNNNNNNNNNNNNNNNN) are compositionally biased toward low complexity. A disordered region spans residues 410 to 442 (NNINNNNNNNNNNNNNNNNNNNNNNNNNNNNNS). Positions 442–769 (SILNFISGIN…SVHIGELFIS (328 aa)) are alpha-1,2-fucosyltransferase.

Belongs to the glycosyltransferase 2 family.

It carries out the reaction an N-acetyl-beta-D-glucosaminyl derivative + UDP-alpha-D-galactose = a beta-D-galactosyl-(1-&gt;3)-N-acetyl-beta-D-glucosaminyl derivative + UDP + H(+). The enzyme catalyses a beta-D-galactosyl-(1-&gt;3)-N-acetyl-beta-D-glucosaminyl derivative + GDP-beta-L-fucose = an alpha-L-Fuc-(1-&gt;2)-beta-D-Gal-(1-&gt;3)-beta-D-GlcNAc derivative + GDP + H(+). In terms of biological role, bifunctional protein composed of 2 glycosyltransferase domains involved in glycosylating skp1. The N-terminal part catalyzes the transfer of a galactose residue to GlcNAc-skp1 in a beta 1-3 linkage. The C-terminal part catalyzes the transfer of a fucose residue to Gal-GlcNAc-skp1 in an alpha 1-2 linkage. The protein is Bifunctional glycosyltransferase pgtA (pgtA) of Dictyostelium discoideum (Social amoeba).